We begin with the raw amino-acid sequence, 212 residues long: Large ribosomal subunit protein uL3 (212 aa).

Q153 carries the post-translational modification N5-methylglutamine.

This sequence belongs to the universal ribosomal protein uL3 family. In terms of assembly, part of the 50S ribosomal subunit. Forms a cluster with proteins L14 and L19. Post-translationally, methylated by PrmB.

Functionally, one of the primary rRNA binding proteins, it binds directly near the 3'-end of the 23S rRNA, where it nucleates assembly of the 50S subunit. This chain is Large ribosomal subunit protein uL3, found in Shewanella woodyi (strain ATCC 51908 / MS32).